Here is a 135-residue protein sequence, read N- to C-terminus: Aspartate 1-decarboxylase (135 aa).

The Schiff-base intermediate with substrate; via pyruvic acid role is filled by S25. S25 is modified (pyruvic acid (Ser)). T57 contributes to the substrate binding site. Y58 acts as the Proton donor in catalysis. 73–75 (GAA) is a binding site for substrate.

It belongs to the PanD family. In terms of assembly, heterooctamer of four alpha and four beta subunits. Requires pyruvate as cofactor. In terms of processing, is synthesized initially as an inactive proenzyme, which is activated by self-cleavage at a specific serine bond to produce a beta-subunit with a hydroxyl group at its C-terminus and an alpha-subunit with a pyruvoyl group at its N-terminus.

Its subcellular location is the cytoplasm. It carries out the reaction L-aspartate + H(+) = beta-alanine + CO2. It participates in cofactor biosynthesis; (R)-pantothenate biosynthesis; beta-alanine from L-aspartate: step 1/1. Functionally, catalyzes the pyruvoyl-dependent decarboxylation of aspartate to produce beta-alanine. The protein is Aspartate 1-decarboxylase of Mycobacterium sp. (strain JLS).